A 216-amino-acid polypeptide reads, in one-letter code: Adenylate kinase (216 aa).

An ATP-binding site is contributed by 10 to 15 (GAGKGT). An NMP region spans residues 30 to 59 (STGDIFRKNISNKTPLGMEAKSYMDKGQLV). AMP contacts are provided by residues Thr-31, Arg-36, 57–59 (QLV), 85–88 (GFPR), and Gln-92. The tract at residues 126–163 (GRRVCGECGASYHIKFITPKTEGVCDLCGGKLVQRKDD) is LID. Arg-127 contributes to the ATP binding site. Positions 130 and 133 each coordinate Zn(2+). 136 to 137 (SY) provides a ligand contact to ATP. Residues Cys-150 and Cys-153 each coordinate Zn(2+). Arg-160 and Arg-171 together coordinate AMP. Lys-199 is a binding site for ATP.

The protein belongs to the adenylate kinase family. In terms of assembly, monomer.

It localises to the cytoplasm. It catalyses the reaction AMP + ATP = 2 ADP. It functions in the pathway purine metabolism; AMP biosynthesis via salvage pathway; AMP from ADP: step 1/1. Catalyzes the reversible transfer of the terminal phosphate group between ATP and AMP. Plays an important role in cellular energy homeostasis and in adenine nucleotide metabolism. The protein is Adenylate kinase of Clostridium tetani (strain Massachusetts / E88).